The chain runs to 647 residues: Protein INVOLVED IN DE NOVO 2 (647 aa).

Disordered stretches follow at residues 1 to 20 and 101 to 123; these read MGSTVILSSDDEDSDISESE and SASEAEPSSKRQKNGNPIQDCDH. The segment covering 9–20 has biased composition (acidic residues); the sequence is SDDEDSDISESE. Positions 253–508 form a coiled coil; sequence IAELTEEEAR…NIMKEWNTNI (256 aa).

As to quaternary structure, interacts with FMD1/IDNL1. Forms a complex with FMD1/IDNL1 and FMD2/INDL2. Can form homodimers. Interacts with MORC6.

Functionally, forms a complex with FDM1/IDNL1 and FDM2/IDNL2 that is required for RNA-directed DNA methylation (RdDM) and that functions at a downstream step of the RdDM pathway and downstream of small interfering RNA (siRNA) formation. Required for de novo DNA methylation, siRNA accumulation and siRNA-mediated maintenance methylation. Required for several post-transcriptional gene silencing pathways. Binds double-stranded RNAs (dsRNAs) with 5'-overhangs through its XS domain. Binds long non-coding RNA (lncRNA) in an AGO4-dependent manner and associates with DRM2, resulting in DNA methylation of RdDM target loci. Mediates the silencing of a subset of MORC6 target loci. The protein is Protein INVOLVED IN DE NOVO 2 of Arabidopsis thaliana (Mouse-ear cress).